We begin with the raw amino-acid sequence, 322 residues long: Aspartate carbamoyltransferase catalytic subunit (322 aa).

The carbamoyl phosphate site is built by arginine 65 and threonine 66. L-aspartate is bound at residue lysine 93. Positions 115, 143, and 146 each coordinate carbamoyl phosphate. L-aspartate is bound by residues arginine 176 and arginine 230. Residues glycine 271 and proline 272 each coordinate carbamoyl phosphate.

The protein belongs to the aspartate/ornithine carbamoyltransferase superfamily. ATCase family. Heterododecamer (2C3:3R2) of six catalytic PyrB chains organized as two trimers (C3), and six regulatory PyrI chains organized as three dimers (R2).

The enzyme catalyses carbamoyl phosphate + L-aspartate = N-carbamoyl-L-aspartate + phosphate + H(+). It functions in the pathway pyrimidine metabolism; UMP biosynthesis via de novo pathway; (S)-dihydroorotate from bicarbonate: step 2/3. Its function is as follows. Catalyzes the condensation of carbamoyl phosphate and aspartate to form carbamoyl aspartate and inorganic phosphate, the committed step in the de novo pyrimidine nucleotide biosynthesis pathway. This Brucella canis (strain ATCC 23365 / NCTC 10854 / RM-666) protein is Aspartate carbamoyltransferase catalytic subunit.